Consider the following 95-residue polypeptide: Small ribosomal subunit protein bS20c (95 aa).

It belongs to the bacterial ribosomal protein bS20 family.

The protein resides in the plastid. Its subcellular location is the chloroplast. Its function is as follows. Binds directly to 16S ribosomal RNA. The chain is Small ribosomal subunit protein bS20c from Pyropia yezoensis (Susabi-nori).